The following is a 518-amino-acid chain: Glutamate--cysteine ligase (518 aa).

It belongs to the glutamate--cysteine ligase type 1 family. Type 1 subfamily.

The enzyme catalyses L-cysteine + L-glutamate + ATP = gamma-L-glutamyl-L-cysteine + ADP + phosphate + H(+). It participates in sulfur metabolism; glutathione biosynthesis; glutathione from L-cysteine and L-glutamate: step 1/2. In Escherichia fergusonii (strain ATCC 35469 / DSM 13698 / CCUG 18766 / IAM 14443 / JCM 21226 / LMG 7866 / NBRC 102419 / NCTC 12128 / CDC 0568-73), this protein is Glutamate--cysteine ligase.